A 353-amino-acid polypeptide reads, in one-letter code: GTPase Obg (353 aa).

Positions 1 to 159 (MRFVDEVVIN…RVIRLELKLL (159 aa)) constitute an Obg domain. An OBG-type G domain is found at 160–334 (ADVGLLGMPN…LCTAIMQELT (175 aa)). GTP is bound by residues 166 to 173 (GMPNAGKS), 191 to 195 (FTTLH), 213 to 216 (DIPG), 284 to 287 (NKMD), and 315 to 317 (SAA). Mg(2+) contacts are provided by Ser173 and Thr193.

The protein belongs to the TRAFAC class OBG-HflX-like GTPase superfamily. OBG GTPase family. As to quaternary structure, monomer. The cofactor is Mg(2+).

It is found in the cytoplasm. Its function is as follows. An essential GTPase which binds GTP, GDP and possibly (p)ppGpp with moderate affinity, with high nucleotide exchange rates and a fairly low GTP hydrolysis rate. Plays a role in control of the cell cycle, stress response, ribosome biogenesis and in those bacteria that undergo differentiation, in morphogenesis control. The protein is GTPase Obg of Dichelobacter nodosus (strain VCS1703A).